Here is a 242-residue protein sequence, read N- to C-terminus: Biosynthetic peptidoglycan transglycosylase (242 aa).

The helical transmembrane segment at 19–39 (ILAALAVFWGGGIALFSVVPV) threads the bilayer.

Belongs to the glycosyltransferase 51 family.

It is found in the cell inner membrane. It catalyses the reaction [GlcNAc-(1-&gt;4)-Mur2Ac(oyl-L-Ala-gamma-D-Glu-L-Lys-D-Ala-D-Ala)](n)-di-trans,octa-cis-undecaprenyl diphosphate + beta-D-GlcNAc-(1-&gt;4)-Mur2Ac(oyl-L-Ala-gamma-D-Glu-L-Lys-D-Ala-D-Ala)-di-trans,octa-cis-undecaprenyl diphosphate = [GlcNAc-(1-&gt;4)-Mur2Ac(oyl-L-Ala-gamma-D-Glu-L-Lys-D-Ala-D-Ala)](n+1)-di-trans,octa-cis-undecaprenyl diphosphate + di-trans,octa-cis-undecaprenyl diphosphate + H(+). It participates in cell wall biogenesis; peptidoglycan biosynthesis. In terms of biological role, peptidoglycan polymerase that catalyzes glycan chain elongation from lipid-linked precursors. In Salmonella agona (strain SL483), this protein is Biosynthetic peptidoglycan transglycosylase.